We begin with the raw amino-acid sequence, 488 residues long: ATP synthase subunit beta (488 aa).

164 to 171 serves as a coordination point for ATP; that stretch reads GGAGVGKT.

This sequence belongs to the ATPase alpha/beta chains family. As to quaternary structure, F-type ATPases have 2 components, CF(1) - the catalytic core - and CF(0) - the membrane proton channel. CF(1) has five subunits: alpha(3), beta(3), gamma(1), delta(1), epsilon(1). CF(0) has four main subunits: a(1), b(1), b'(1) and c(9-12).

It localises to the cellular thylakoid membrane. The catalysed reaction is ATP + H2O + 4 H(+)(in) = ADP + phosphate + 5 H(+)(out). Functionally, produces ATP from ADP in the presence of a proton gradient across the membrane. The catalytic sites are hosted primarily by the beta subunits. In Prochlorococcus marinus (strain NATL1A), this protein is ATP synthase subunit beta.